Reading from the N-terminus, the 176-residue chain is Peptide deformylase (176 aa).

Residues Cys-92 and His-134 each contribute to the Fe cation site. Residue Glu-135 is part of the active site. His-138 is a Fe cation binding site.

It belongs to the polypeptide deformylase family. The cofactor is Fe(2+).

The enzyme catalyses N-terminal N-formyl-L-methionyl-[peptide] + H2O = N-terminal L-methionyl-[peptide] + formate. Its function is as follows. Removes the formyl group from the N-terminal Met of newly synthesized proteins. Requires at least a dipeptide for an efficient rate of reaction. N-terminal L-methionine is a prerequisite for activity but the enzyme has broad specificity at other positions. The protein is Peptide deformylase of Acinetobacter baumannii (strain SDF).